A 123-amino-acid polypeptide reads, in one-letter code: Ig heavy chain V region HPCG13 (123 aa).

Residues 1 to 114 (EVKLVESGGG…GSYWYFDVWG (114 aa)) enclose the Ig-like domain.

The sequence is that of Ig heavy chain V region HPCG13 from Mus musculus (Mouse).